A 149-amino-acid polypeptide reads, in one-letter code: Placenta growth factor (149 aa).

A signal peptide spans 1 to 18 (MPTVRLFTCFLQLLTGLV). Residue Asn-33 is glycosylated (N-linked (GlcNAc...) asparagine). Cystine bridges form between Cys-52–Cys-94, Cys-83–Cys-128, and Cys-87–Cys-130. N-linked (GlcNAc...) asparagine glycosylation occurs at Asn-101.

It belongs to the PDGF/VEGF growth factor family. Antiparallel homodimer; disulfide-linked. Also found as heterodimer with VEGFA/VEGF.

It localises to the secreted. In terms of biological role, growth factor active in angiogenesis and endothelial cell growth, stimulating their proliferation and migration. It binds to the receptor FLT1/VEGFR-1. Also promotes cell tumor growth. The polypeptide is Placenta growth factor (PGF) (Bos taurus (Bovine)).